A 143-amino-acid chain; its full sequence is MAGVSVKDVDAQQFINAYAAFLKRSGKMTTPQWIDIVKTGTHKELAPYDPDWYYVRAAAIARHIYLRKQVGVGRLCKVYGGSVNRGMRPSHHRDGSGSVQRKVVQSLEKIGVLEKSDNGGRRISQQGQRDLDRIAYSLLEDEE.

The protein belongs to the eukaryotic ribosomal protein eS19 family. Component of the small ribosomal subunit (SSU). Mature yeast ribosomes consist of a small (40S) and a large (60S) subunit. The 40S small subunit contains 1 molecule of ribosomal RNA (18S rRNA) and at least 33 different proteins. The large 60S subunit contains 3 rRNA molecules (25S, 5.8S and 5S rRNA) and at least 46 different proteins.

It is found in the cytoplasm. Its subcellular location is the nucleus. Functionally, component of the ribosome, a large ribonucleoprotein complex responsible for the synthesis of proteins in the cell. The small ribosomal subunit (SSU) binds messenger RNAs (mRNAs) and translates the encoded message by selecting cognate aminoacyl-transfer RNA (tRNA) molecules. The large subunit (LSU) contains the ribosomal catalytic site termed the peptidyl transferase center (PTC), which catalyzes the formation of peptide bonds, thereby polymerizing the amino acids delivered by tRNAs into a polypeptide chain. The nascent polypeptides leave the ribosome through a tunnel in the LSU and interact with protein factors that function in enzymatic processing, targeting, and the membrane insertion of nascent chains at the exit of the ribosomal tunnel. eS19 is required for proper maturation of the small (40S) ribosomal subunit. Binds to 40S pre-ribosomal particles, probably required after association of NOC4 but before association of ENP1, TSR1 and RIO2 with 20/21S pre-rRNA. This Schizosaccharomyces pombe (strain 972 / ATCC 24843) (Fission yeast) protein is Small ribosomal subunit protein eS19B (rps1902).